Consider the following 599-residue polypeptide: MRTVFIYACIISLVLRTIPAHNDLMSKEKENKEKDVHKIIEDLRFLEKVDAILENSNMTIDDVKADADAYNPDEDAPKEELNKIEMEKKKAEEEAKNSKKKILERYLLDEKKKKSLRLIVSENHATSPSFFEESLIQEDFMSFIQSKGEIVNLKNLKSMIIELNSDMTDKELEAYITLLKKKGAHVESDELVGADSIYVDIIKDAVKRGDTSINFKKMQSNMLEVENKTYEKLNNNLKKSKNSYKKSFFNDEYRNLQWGLDLARLDDAQEMITTNSVETTKICVIDSGIDYNHPDLKGNIYVNLNELNGKEGIDDDNNGIIDDIYGVNYVNNTGDPWDDHNHGSHVSGIISAIGNNSIGVVGVNPSSKLVICKALDDKKLGRLGNIFKCIDYCINKKVNIINGSFSFDEYSTIFSSTIEYLARLGILFVVSSSNCSHPPSSIPDITRCDLSVNSKYPSVLSTQYDNMVVVANLKKKINGEYDISINSFYSDIYCQVSAPGANIYSTASRGSYMELSGTSMAAPHVAGIASIILSINPDLTYKQVVNILKNSVVKLSSHKNKIAWGGYIDILNAVKNAISSKNSYIRFQGIRMWKSKKRN.

The first 20 residues, 1-20, serve as a signal peptide directing secretion; sequence MRTVFIYACIISLVLRTIPA. Residues 21–195 constitute a propeptide, inhibition peptide; it reads HNDLMSKEKE…VESDELVGAD (175 aa). The N-linked (GlcNAc...) asparagine glycan is linked to asparagine 57. The stretch at 74–101 forms a coiled coil; that stretch reads EDAPKEELNKIEMEKKKAEEEAKNSKKK. Ca(2+) is bound by residues asparagine 123, threonine 126, proline 128, and glycine 183. Asparagine 227 is a glycosylation site (N-linked (GlcNAc...) asparagine). Position 251 (aspartate 251) interacts with Ca(2+). The region spanning 257-574 is the Peptidase S8 domain; that stretch reads QWGLDLARLD…GGYIDILNAV (318 aa). 2 disulfide bridges follow: cysteine 283–cysteine 393 and cysteine 372–cysteine 389. Aspartate 286 acts as the Charge relay system in catalysis. Ca(2+) is bound by residues aspartate 295, glutamate 306, aspartate 314, aspartate 315, aspartate 316, asparagine 318, isoleucine 320, aspartate 322, and aspartate 323. Residue asparagine 331 is glycosylated (N-linked (GlcNAc...) asparagine). Histidine 342 functions as the Charge relay system in the catalytic mechanism. Residue isoleucine 353 participates in Ca(2+) binding. N-linked (GlcNAc...) asparagine glycosylation occurs at asparagine 355. Residues asparagine 356, isoleucine 358, and valine 360 each contribute to the Ca(2+) site. N-linked (GlcNAc...) asparagine glycosylation is found at asparagine 402 and asparagine 434. Cysteine 435 and cysteine 448 form a disulfide bridge. Serine 519 functions as the Charge relay system in the catalytic mechanism.

This sequence belongs to the peptidase S8 family. In terms of processing, the N-terminal prodomain is cleaved.

It is found in the secreted. It localises to the parasitophorous vacuole lumen. The protein resides in the cytoplasmic vesicle. Its subcellular location is the secretory vesicle. The catalysed reaction is Hydrolysis of proteins with broad specificity for peptide bonds, and a preference for a large uncharged residue in P1. Hydrolyzes peptide amides.. Its function is as follows. Mediates the proteolytic maturation of serine protease SERA3. Mediates the proteolytic maturation of MSP1, and thereby may prime the parasite cell surface for invasion of fresh erythrocytes. Required for completion of the parasite pre-erythrocytic stages. Required for hepatic schizont development and merozoite formation. Required for the egress of the hepatic merozoites from the parasitophorous vacuole. Required for parasite infectivity during blood stages. Required for male gamete egress. This is Subtilisin-like protease 1 from Plasmodium berghei (strain Anka).